The chain runs to 284 residues: GPN-loop GTPase 3 (284 aa).

GTP is bound at residue 13 to 18; that stretch reads GSGKST. Residues 72–74 carry the Gly-Pro-Asn (GPN)-loop; involved in dimer interface motif; the sequence is GPN. 174–177 contacts GTP; the sequence is TKMD. Residues 261–284 are disordered; the sequence is KEPKEHEEESSSMFDEYFQERQNE.

The protein belongs to the GPN-loop GTPase family. In terms of assembly, heterodimer with GPN1. Binds to RNA polymerase II (RNAPII). Interacts directly with subunits RPB4 and RPB7 and the CTD of RPB1.

In terms of biological role, small GTPase required for proper localization of RNA polymerase II (RNAPII). May act at an RNAP assembly step prior to nuclear import. In Rattus norvegicus (Rat), this protein is GPN-loop GTPase 3.